We begin with the raw amino-acid sequence, 303 residues long: MYYGFDIGGTKIALGVFDSGRQLQWEKRVPTPRDSYDAFLDAVCELVAEADQRFGCKGSVGIGIPGMPETEDGTLYAANVPAASGKPLRADLSARLDRDVRLDNDANCFALSEAWDDEFTQYPLVMGLILGTGVGGGLIFNGKPITGKSYITGEFGHMRLPVDALTMMGLDFPLRRCGCGQHGCIENYLSGRGFAWLYQHYYHQPLPAPEIIALYDQGDEQARAHVERYLDLLAVCLGNILTIVDPDLVVIGGGLSNFPAITTQLADRLPRHLLPVARVPRIERARHGDAGGMRGAAFLHLTD.

Residues 4-11 (GFDIGGTK) and 133-140 (GVGGGLIF) each bind ATP. His157, Cys177, Cys179, and Cys184 together coordinate Zn(2+).

This sequence belongs to the ROK (NagC/XylR) family. NagK subfamily.

The catalysed reaction is N-acetyl-D-glucosamine + ATP = N-acetyl-D-glucosamine 6-phosphate + ADP + H(+). It participates in cell wall biogenesis; peptidoglycan recycling. Functionally, catalyzes the phosphorylation of N-acetyl-D-glucosamine (GlcNAc) derived from cell-wall degradation, yielding GlcNAc-6-P. This Escherichia coli O157:H7 protein is N-acetyl-D-glucosamine kinase.